A 350-amino-acid polypeptide reads, in one-letter code: Arginine N-succinyltransferase (350 aa).

L125 is a succinyl-CoA binding site. H229 (proton donor) is an active-site residue.

Belongs to the arginine N-succinyltransferase family.

The catalysed reaction is succinyl-CoA + L-arginine = N(2)-succinyl-L-arginine + CoA + H(+). The protein operates within amino-acid degradation; L-arginine degradation via AST pathway; L-glutamate and succinate from L-arginine: step 1/5. Catalyzes the transfer of succinyl-CoA to arginine to produce N(2)-succinylarginine. The protein is Arginine N-succinyltransferase of Yersinia pseudotuberculosis serotype IB (strain PB1/+).